Consider the following 325-residue polypeptide: MTTPFVLAVPSKGRLQENADAFFGRAGLTLAKPRGARDYRGTITGLDNVEIAYLSASEIAAQLARGQVHLGITGEDLVRETIADADKRVMLIEGLGFGYANVVVAVPQAWIDVRTMADLDDVATSFRVKHNRRMRVATKYINLTRHFFALHGIVDYRIVESAGATEGAPASGAAELIVDITTTGATLAANGLKMLDDGMMLRSQANLVASRAADWTPEARETARVILDHIASRARAAKYKEVRTCLPGCDAALLSEIEQHFGALAPFGTPPAGGILTLHCPPAQLYPLGTLLRARGAETVSIGSLDYVMARDNPLFSRLEAFLGA.

The protein belongs to the ATP phosphoribosyltransferase family. Long subfamily. Mg(2+) is required as a cofactor.

It localises to the cytoplasm. The catalysed reaction is 1-(5-phospho-beta-D-ribosyl)-ATP + diphosphate = 5-phospho-alpha-D-ribose 1-diphosphate + ATP. Its pathway is amino-acid biosynthesis; L-histidine biosynthesis; L-histidine from 5-phospho-alpha-D-ribose 1-diphosphate: step 1/9. Feedback inhibited by histidine. Catalyzes the condensation of ATP and 5-phosphoribose 1-diphosphate to form N'-(5'-phosphoribosyl)-ATP (PR-ATP). Has a crucial role in the pathway because the rate of histidine biosynthesis seems to be controlled primarily by regulation of HisG enzymatic activity. This Afipia carboxidovorans (strain ATCC 49405 / DSM 1227 / KCTC 32145 / OM5) (Oligotropha carboxidovorans) protein is ATP phosphoribosyltransferase.